Here is a 307-residue protein sequence, read N- to C-terminus: Formate hydrogenlyase subunit 4 (307 aa).

Topologically, residues 1–2 are periplasmic; it reads MS. Residues 3–23 form a helical membrane-spanning segment; sequence VLYPLIQALVLFAVAPLLSGI. At 24 to 67 the chain is on the cytoplasmic side; the sequence is TRVARARLHNRRGPGVLQEYRDIIKLLGRQSVGPDASGWVFRLT. The chain crosses the membrane as a helical span at residues 68–88; the sequence is PYVMVGVMLTIATALPVVTVG. Residues 89–93 lie on the Periplasmic side of the membrane; that stretch reads SPLPQ. A helical transmembrane segment spans residues 94 to 114; sequence LGDLITLLYLFAIARFFFAIS. Residues 115 to 131 are Cytoplasmic-facing; the sequence is GLDTGSPFTAIGASREA. Residues 132-152 traverse the membrane as a helical segment; sequence MLGVLVEPMLLLGLWVAAQVA. Over 153 to 167 the chain is Periplasmic; it reads GSTNISNITDTVYHW. A helical membrane pass occupies residues 168–188; it reads PLSQSIPLVLALCACAFATFI. Topologically, residues 189–221 are cytoplasmic; it reads EMGKLPFDLAEAEQELQEGPLSEYSGSGFGVMK. Residues 222-242 form a helical membrane-spanning segment; the sequence is WGISLKQLVVLQMFVGVFIPW. At 243–253 the chain is on the periplasmic side; it reads GQMETFTAGGL. The chain crosses the membrane as a helical span at residues 254 to 274; that stretch reads LLALVIAIVKLVVGVLVIALF. Topologically, residues 275-284 are cytoplasmic; that stretch reads ENSMARLRLD. Residues 285-305 form a helical membrane-spanning segment; it reads ITPRITWAGFGFAFLAFVSLL. The Periplasmic portion of the chain corresponds to 306–307; the sequence is AA.

This sequence belongs to the complex I subunit 1 family. In terms of assembly, FHL comprises of a formate dehydrogenase, unidentified electron carriers and a hydrogenase (isoenzyme 3). In this non-energy conserving pathway molecular hydrogen and carbodioxide from formate are released.

It is found in the cell inner membrane. The protein is Formate hydrogenlyase subunit 4 (hycD) of Escherichia coli (strain K12).